The sequence spans 162 residues: Sec-independent protein translocase protein TatB (162 aa).

The helical transmembrane segment at 1-21 threads the bilayer; sequence MFDIGFSELILIFVVGLVVLG. Residues 136–162 are disordered; sequence LTAYYPPDDDLVSPSTTKLEQDKQNVN.

This sequence belongs to the TatB family. As to quaternary structure, the Tat system comprises two distinct complexes: a TatABC complex, containing multiple copies of TatA, TatB and TatC subunits, and a separate TatA complex, containing only TatA subunits. Substrates initially bind to the TatABC complex, which probably triggers association of the separate TatA complex to form the active translocon.

The protein resides in the cell inner membrane. In terms of biological role, part of the twin-arginine translocation (Tat) system that transports large folded proteins containing a characteristic twin-arginine motif in their signal peptide across membranes. Together with TatC, TatB is part of a receptor directly interacting with Tat signal peptides. TatB may form an oligomeric binding site that transiently accommodates folded Tat precursor proteins before their translocation. This chain is Sec-independent protein translocase protein TatB, found in Haemophilus ducreyi (strain 35000HP / ATCC 700724).